The sequence spans 875 residues: Serine/threonine-protein kinase ATG1 (875 aa).

A Protein kinase domain is found at 22–318; the sequence is YSIGPEIGKG…FNEFFNDPLI (297 aa). ATP contacts are provided by residues 28–36 and Lys-51; that span reads IGKGSFATV. Catalysis depends on Asp-168, which acts as the Proton acceptor. The segment covering 367-379 has biased composition (basic and acidic residues); it reads EKSKQDLPAREVS. Disordered regions lie at residues 367 to 422 and 470 to 515; these read EKSK…QPHN and INPR…DRRI. Residues 380–389 are compositionally biased toward polar residues; that stretch reads THASESQTKA. Positions 390 to 405 are enriched in basic and acidic residues; sequence VDTRPSSRDEEIKEII. Polar residues-rich tracts occupy residues 406-420, 473-490, and 497-508; these read NKNSPGPETSRSIQP, RRTSSGSDNSYNGPNNMQ, and LRSNSSGSQRRP.

This sequence belongs to the protein kinase superfamily. Ser/Thr protein kinase family. APG1/unc-51/ULK1 subfamily. As to quaternary structure, homodimer. Forms a ternary complex with ATG13 and ATG17.

It localises to the cytoplasm. The protein resides in the preautophagosomal structure membrane. It catalyses the reaction L-seryl-[protein] + ATP = O-phospho-L-seryl-[protein] + ADP + H(+). The enzyme catalyses L-threonyl-[protein] + ATP = O-phospho-L-threonyl-[protein] + ADP + H(+). Functionally, serine/threonine protein kinase involved in the cytoplasm to vacuole transport (Cvt) and found to be essential in autophagy, where it is required for the formation of autophagosomes. Involved in the clearance of protein aggregates which cannot be efficiently cleared by the proteasome. Required for selective autophagic degradation of the nucleus (nucleophagy) as well as for mitophagy which contributes to regulate mitochondrial quantity and quality by eliminating the mitochondria to a basal level to fulfill cellular energy requirements and preventing excess ROS production. Also involved in endoplasmic reticulum-specific autophagic process, in selective removal of ER-associated degradation (ERAD) substrates. Plays a key role in ATG9 and ATG23 cycling through the pre-autophagosomal structure and is necessary to promote ATG18 binding to ATG9 through phosphorylation of ATG9. Catalyzes phosphorylation of ATG4, decreasing the interaction between ATG4 and ATG8 and impairing deconjugation of PE-conjugated forms of ATG8. The chain is Serine/threonine-protein kinase ATG1 from Debaryomyces hansenii (strain ATCC 36239 / CBS 767 / BCRC 21394 / JCM 1990 / NBRC 0083 / IGC 2968) (Yeast).